The sequence spans 1687 residues: Gag-Pol polyprotein (1687 aa).

The N-myristoyl glycine; by host moiety is linked to residue G2. Disordered stretches follow at residues 106 to 197 (SSPE…VILP) and 420 to 490 (HKRE…LDKD). Positions 108–111 (PENT) match the PTAP/PSAP motif motif. The span at 139–157 (EPPPYPAALPPPLAPPAVG) shows a compositional bias: pro residues. The PPXY motif motif lies at 140 to 143 (PPPY). Residues 408–455 (LQDLVREAEKVYHKRETEEERQEREKKEAEERERRRDRRQEKNLTRIL) adopt a coiled-coil conformation. Composition is skewed to basic and acidic residues over residues 420–451 (HKRE…EKNL) and 479–490 (TPRDGRPPLDKD). Residues 490–507 (DQCAYCKEKGHWARECPQ) form a CCHC-type zinc finger. In terms of domain architecture, Peptidase A2 spans 544–614 (IEFLVDTGAE…CPAPLLGRDL (71 aa)). D549 serves as the catalytic Protease; shared with dimeric partner. Residues 721–912 (LDLGVLVPCQ…KEVTYLGYLL (192 aa)) form the Reverse transcriptase domain. Mg(2+) is bound by residues D789, D863, D864, D1180, E1200, D1221, and D1291. The 147-residue stretch at 1153–1299 (LPGVPAWYTD…ADEAAKQAAL (147 aa)) folds into the RNase H type-1 domain. The segment at 1339-1377 (HQLTHLGPEKLLQLVNRTSLLIPNLQSAVREVTSQCQAC) adopts an HHCC-type zinc-finger fold. One can recognise an Integrase catalytic domain in the interval 1394–1552 (RGDRPGVYWE…TPYEILYGGP (159 aa)). Positions 1405 and 1464 each coordinate Mg(2+).

This sequence belongs to the retroviral Pol polyprotein family. Homohexamer; further associates as homomultimer. The virus core is composed of a lattice formed from hexagonal rings, each containing six capsid monomers. In terms of assembly, interacts (via PPXY motif) with host NEDD4. Interacts (via PSAP motif) with host TSG101. As to quaternary structure, the reverse transcriptase is a monomer (Potential). Interacts (via RNase domains) with host release factor ETF1; this interaction is essential for translational readthrough of amber codon between viral gag and pol genes, as well as for viral replication. Homodimer. Mg(2+) is required as a cofactor. Specific enzymatic cleavages by the viral protease yield mature proteins. The protease is released by autocatalytic cleavage. The polyprotein is cleaved during and after budding, this process is termed maturation. Post-translationally, phosphorylated on serine residues.

The protein resides in the virion. Its subcellular location is the host cell membrane. It localises to the host late endosome membrane. It is found in the host endosome. The protein localises to the host multivesicular body. The protein resides in the host cytoplasm. It catalyses the reaction DNA(n) + a 2'-deoxyribonucleoside 5'-triphosphate = DNA(n+1) + diphosphate. The catalysed reaction is Endonucleolytic cleavage to 5'-phosphomonoester.. Most efficiently inhibited by Amprenavir, which is able to block Gag-Pol processing in infected cells. In terms of biological role, plays a role in budding and is processed by the viral protease during virion maturation outside the cell. During budding, it recruits, in a PPXY-dependent or independent manner, Nedd4-like ubiquitin ligases that conjugate ubiquitin molecules to Gag-Pol, or to Gag-Pol binding host factors. Interaction with HECT ubiquitin ligases probably links the viral protein to the host ESCRT pathway and facilitates release. Its function is as follows. Targets Gag and gag-pol polyproteins to the plasma membrane via a multipartite membrane binding signal, that includes its myristoylated N-terminus. Also mediates nuclear localization of the pre-integration complex. Functionally, constituent of the pre-integration complex (PIC) which tethers the latter to mitotic chromosomes. This allows the integration of the viral genome into the host DNA. Forms the spherical core of the virion that encapsulates the genomic RNA-nucleocapsid complex. In terms of biological role, involved in the packaging and encapsidation of two copies of the genome. Binds with high affinity to conserved UCUG elements within the packaging signal, located near the 5'-end of the genome. This binding is dependent on genome dimerization. Acts as a nucleic acid chaperone which is involved in rearrangement of nucleic acid secondary structures during gRNA retrotranscription. Its function is as follows. The aspartyl protease mediates proteolytic cleavages of Gag and Gag-Pol polyproteins during or shortly after the release of the virion from the plasma membrane. Cleavages take place as an ordered, step-wise cascade to yield mature proteins. This process is called maturation. Displays maximal activity during the budding process just prior to particle release from the cell. Functionally, RT is a multifunctional enzyme that converts the viral dimeric RNA genome into dsDNA in the cytoplasm, shortly after virus entry into the cell. This enzyme displays a DNA polymerase activity that can copy either DNA or RNA templates, and a ribonuclease H (RNase H) activity that cleaves the RNA strand of RNA-DNA heteroduplexes in a partially processive 3' to 5' endonucleasic mode. Conversion of viral genomic RNA into dsDNA requires many steps. A tRNA binds to the primer-binding site (PBS) situated at the 5' end of the viral RNA. RT uses the 3' end of the tRNA primer to perform a short round of RNA-dependent minus-strand DNA synthesis. The reading proceeds through the U5 region and ends after the repeated (R) region which is present at both ends of viral RNA. The portion of the RNA-DNA heteroduplex is digested by the RNase H, resulting in a ssDNA product attached to the tRNA primer. This ssDNA/tRNA hybridizes with the identical R region situated at the 3' end of viral RNA. This template exchange, known as minus-strand DNA strong stop transfer, can be either intra- or intermolecular. RT uses the 3' end of this newly synthesized short ssDNA to perform the RNA-dependent minus-strand DNA synthesis of the whole template. RNase H digests the RNA template except for a polypurine tract (PPT) situated at the 5' end of the genome. It is not clear if both polymerase and RNase H activities are simultaneous. RNase H probably can proceed both in a polymerase-dependent (RNA cut into small fragments by the same RT performing DNA synthesis) and a polymerase-independent mode (cleavage of remaining RNA fragments by free RTs). Secondly, RT performs DNA-directed plus-strand DNA synthesis using the PPT that has not been removed by RNase H as primers. PPT and tRNA primers are then removed by RNase H. The 3' and 5' ssDNA PBS regions hybridize to form a circular dsDNA intermediate. Strand displacement synthesis by RT to the PBS and PPT ends produces a blunt ended, linear dsDNA copy of the viral genome that includes long terminal repeats (LTRs) at both ends. Catalyzes viral DNA integration into the host chromosome, by performing a series of DNA cutting and joining reactions. This enzyme activity takes place after virion entry into a cell and reverse transcription of the RNA genome in dsDNA. The first step in the integration process is 3' processing. This step requires a complex comprising the viral genome, matrix protein and integrase. This complex is called the pre-integration complex (PIC). The integrase protein removes 2 nucleotides from each 3' end of the viral DNA, leaving recessed CA OH's at the 3' ends. In the second step that requires cell division, the PIC enters cell nucleus. In the third step, termed strand transfer, the integrase protein joins the previously processed 3' ends to the 5' ends of strands of target cellular DNA at the site of integration. The last step is viral DNA integration into host chromosome. In Woolly monkey sarcoma virus (WMSV), this protein is Gag-Pol polyprotein (pol).